The chain runs to 153 residues: Large ribosomal subunit protein bL9 (153 aa).

This sequence belongs to the bacterial ribosomal protein bL9 family.

Binds to the 23S rRNA. The protein is Large ribosomal subunit protein bL9 of Koribacter versatilis (strain Ellin345).